The sequence spans 280 residues: Polyamine aminopropyltransferase 1 (280 aa).

The PABS domain occupies aspartate 3 to lysine 237. Glutamine 33 is an S-methyl-5'-thioadenosine binding site. The spermidine site is built by histidine 64 and aspartate 88. S-methyl-5'-thioadenosine contacts are provided by residues aspartate 108 and aspartate 139–glycine 140. Aspartate 157 serves as the catalytic Proton acceptor. Aspartate 157–aspartate 160 contributes to the spermidine binding site.

Belongs to the spermidine/spermine synthase family. In terms of assembly, homodimer or homotetramer.

It is found in the cytoplasm. It catalyses the reaction S-adenosyl 3-(methylsulfanyl)propylamine + putrescine = S-methyl-5'-thioadenosine + spermidine + H(+). The protein operates within amine and polyamine biosynthesis; spermidine biosynthesis; spermidine from putrescine: step 1/1. In terms of biological role, catalyzes the irreversible transfer of a propylamine group from the amino donor S-adenosylmethioninamine (decarboxy-AdoMet) to putrescine (1,4-diaminobutane) to yield spermidine. The sequence is that of Polyamine aminopropyltransferase 1 from Aquifex aeolicus (strain VF5).